Here is a 494-residue protein sequence, read N- to C-terminus: Chromosomal replication initiator protein DnaA (494 aa).

The domain I, interacts with DnaA modulators stretch occupies residues 1 to 103 (MTNIGGPVVE…LRVEVIVRGM (103 aa)). The segment at 103 to 148 (MKRVSKGVVCRTSAAPVVLEGQTASSFVESYTEPSVKDIEAGVFGS) is domain II. The segment at 149 to 371 (PLDSRYTFES…GAFNQLLFRQ (223 aa)) is domain III, AAA+ region. Positions 195, 197, 198, and 199 each coordinate ATP. Residues 372-494 (SFESDLSLER…LKRLIGEQAA (123 aa)) are domain IV, binds dsDNA.

It belongs to the DnaA family. Oligomerizes as a right-handed, spiral filament on DNA at oriC.

The protein localises to the cytoplasm. Functionally, plays an essential role in the initiation and regulation of chromosomal replication. ATP-DnaA binds to the origin of replication (oriC) to initiate formation of the DNA replication initiation complex once per cell cycle. Binds the DnaA box (a 9 base pair repeat at the origin) and separates the double-stranded (ds)DNA. Forms a right-handed helical filament on oriC DNA; dsDNA binds to the exterior of the filament while single-stranded (ss)DNA is stabiized in the filament's interior. The ATP-DnaA-oriC complex binds and stabilizes one strand of the AT-rich DNA unwinding element (DUE), permitting loading of DNA polymerase. After initiation quickly degrades to an ADP-DnaA complex that is not apt for DNA replication. Binds acidic phospholipids. The protein is Chromosomal replication initiator protein DnaA of Bartonella quintana (strain Toulouse) (Rochalimaea quintana).